The primary structure comprises 245 residues: tRNA pseudouridine synthase A (245 aa).

The active-site Nucleophile is the Asp-52. Tyr-111 is a substrate binding site.

This sequence belongs to the tRNA pseudouridine synthase TruA family. As to quaternary structure, homodimer.

The enzyme catalyses uridine(38/39/40) in tRNA = pseudouridine(38/39/40) in tRNA. Formation of pseudouridine at positions 38, 39 and 40 in the anticodon stem and loop of transfer RNAs. The sequence is that of tRNA pseudouridine synthase A from Afipia carboxidovorans (strain ATCC 49405 / DSM 1227 / KCTC 32145 / OM5) (Oligotropha carboxidovorans).